We begin with the raw amino-acid sequence, 364 residues long: Alanine racemase (364 aa).

Catalysis depends on lysine 34, which acts as the Proton acceptor; specific for D-alanine. Lysine 34 carries the N6-(pyridoxal phosphate)lysine modification. A substrate-binding site is contributed by arginine 129. Tyrosine 259 functions as the Proton acceptor; specific for L-alanine in the catalytic mechanism. Methionine 307 contributes to the substrate binding site.

This sequence belongs to the alanine racemase family. Requires pyridoxal 5'-phosphate as cofactor.

The enzyme catalyses L-alanine = D-alanine. The protein operates within amino-acid biosynthesis; D-alanine biosynthesis; D-alanine from L-alanine: step 1/1. Functionally, catalyzes the interconversion of L-alanine and D-alanine. May also act on other amino acids. This chain is Alanine racemase (alr), found in Coxiella burnetii (strain CbuK_Q154) (Coxiella burnetii (strain Q154)).